We begin with the raw amino-acid sequence, 70 residues long: Turripeptide Pal9.2 (70 aa).

The signal sequence occupies residues 1–20 (MKVYCLLVVLLVGLVSQTQG). The Kazal-like domain occupies 21-70 (QLDKKCNMACTLDYRPVCGSDGKTYPNRCALTSTACESQQSITVLHDGEC). 3 disulfides stabilise this stretch: C26–C56, C30–C49, and C38–C70.

Belongs to the conopeptide P-like superfamily. In terms of tissue distribution, expressed by the venom duct.

The protein localises to the secreted. Functionally, acts as a neurotoxin by inhibiting an ion channel. May also act as a serine protease inhibitor, since it possess the kazal serine protease inhibitor signature. The polypeptide is Turripeptide Pal9.2 (Polystira albida (White giant-turris)).